Consider the following 326-residue polypeptide: Putative [LysW]-lysine/[LysW]-ornithine hydrolase (326 aa).

His-66 lines the Zn(2+) pocket. The active site involves Asp-68. Asp-90 contacts Zn(2+). The active-site Proton acceptor is Glu-117. Positions 118, 139, and 297 each coordinate Zn(2+).

It belongs to the peptidase M20A family. LysK subfamily. Zn(2+) is required as a cofactor. It depends on Co(2+) as a cofactor.

Its subcellular location is the cytoplasm. It carries out the reaction [amino-group carrier protein]-C-terminal-gamma-(L-lysyl)-L-glutamate + H2O = [amino-group carrier protein]-C-terminal-L-glutamate + L-lysine. The catalysed reaction is [amino-group carrier protein]-C-terminal-gamma-(L-ornithyl)-L-glutamate + H2O = [amino-group carrier protein]-C-terminal-L-glutamate + L-ornithine. It participates in amino-acid biosynthesis; L-lysine biosynthesis via AAA pathway; L-lysine from L-alpha-aminoadipate (Thermus route): step 5/5. Its pathway is amino-acid biosynthesis; L-arginine biosynthesis. Its function is as follows. Catalyzes the release of L-lysine from [LysW]-gamma-L-lysine and the release of L-ornithine from [LysW]-L-ornithine. This Pyrococcus furiosus (strain ATCC 43587 / DSM 3638 / JCM 8422 / Vc1) protein is Putative [LysW]-lysine/[LysW]-ornithine hydrolase.